The sequence spans 1209 residues: Calcium-activated potassium channel subunit alpha-1 (1209 aa).

Residues 1–26 (MANGGGGGGGGSSGSSGGGGGGGGGE) are compositionally biased toward gly residues. Disordered regions lie at residues 1-29 (MANG…ETAL) and 42-64 (LDAS…SVHE). Over 1–87 (MANGGGGGGG…VPCDSRGQRM (87 aa)) the chain is Extracellular. Residues 45–61 (SSSSSSSSSSSSSSSSS) show a composition bias toward low complexity. Residues 88-108 (WWAFLASSMVTFFGGLFIILL) form a helical membrane-spanning segment. Topologically, residues 109-179 (WRTLKYLWTV…MISAQTLTGR (71 aa)) are cytoplasmic. S-palmitoyl cysteine attachment occurs at residues Cys119, Cys120, and Cys122. Residues 180-200 (VLVVLVFALSIGALVIYFIDS) traverse the membrane as a helical segment. Residues 201–215 (SNPIESCQNFYKDFT) are Extracellular-facing. The chain crosses the membrane as a helical span at residues 216–236 (LQIDMAFNVFFLLYFGLRFIA). Over 237–240 (ANDK) the chain is Cytoplasmic. The chain crosses the membrane as a helical span at residues 241–261 (LWFWLEVNSVVDFFTVPPVFV). At 262-265 (SVYL) the chain is on the extracellular side. Residues 266 to 286 (NRSWLGLRFLRALRLIQFSEI) form a helical; Voltage-sensor membrane-spanning segment. The Cytoplasmic portion of the chain corresponds to 287–301 (LQFLNILKTSNSIKL). Residues 302–322 (VNLLSIFISTWLTAAGFIHLV) traverse the membrane as a helical segment. The Extracellular portion of the chain corresponds to 323–336 (ENSGDPWENFQNNQ). An intramembrane region (pore-forming) is located at residues 337-359 (ALTYWECVYLLMVTMSTVGYGDV). The Selectivity for potassium signature appears at 353–356 (TVGY). Residues 360-368 (YAKTTLGRL) are Extracellular-facing. A helical transmembrane segment spans residues 369–389 (FMVFFILGGLAMFASYVPEII). Over 390–1209 (ELIGNRKKYG…DKQKKEMVYR (820 aa)) the chain is Cytoplasmic. Residues 408-550 (RKHIVVCGHI…WNWKEGDDAI (143 aa)) enclose the RCK N-terminal 1 domain. Mg(2+) is bound by residues Glu440, Gln463, and Glu465. The segment at 557–577 (LGFIAQSCLAQGLSTMLANLF) is segment S7. Residues 614 to 634 (LSFPTVCELCFVKLKLLMIAI) are segment S8. Positions 682–686 (CKACH) are heme-binding motif. The segment at 704-734 (EDEQPPTLSPKKKQRNGGMRNSPNTSPKLMR) is disordered. Phosphothreonine is present on Thr710. Phosphoserine occurs at positions 712, 725, and 729. A segment S9 region spans residues 784-804 (VLSGHVVVCIFGDVSSALIGL). The 145-residue stretch at 786-930 (SGHVVVCIFG…MDRSSPDNSP (145 aa)) folds into the RCK N-terminal 2 domain. The residue at position 917 (Thr917) is a Phosphothreonine. Ser925 and Ser929 each carry phosphoserine. The Calcium bowl signature appears at 977–999 (TELVNDTNVQFLDQDDDDDPDTE). Residues Gln986, Asp989, Asp992, and Asp994 each contribute to the Ca(2+) site. The segment S10 stretch occupies residues 1006 to 1026 (FACGTAFAVSVLDSLMSATYF). Over residues 1160 to 1185 (RASLSHSSHSSQSSSKKSSSVHSIPS) the composition is skewed to low complexity. Residues 1160–1209 (RASLSHSSHSSQSSSKKSSSVHSIPSTANRPNRPKSRESRDKQKKEMVYR) are disordered. Basic and acidic residues predominate over residues 1194–1209 (KSRESRDKQKKEMVYR). Phosphoserine is present on residues Ser1195 and Ser1198.

This sequence belongs to the potassium channel family. Calcium-activated (TC 1.A.1.3) subfamily. KCa1.1/KCNMA1 sub-subfamily. As to quaternary structure, homotetramer; which constitutes the calcium-activated potassium channel. Interacts with beta subunits KCNMB1, KCNMB2, KCNMB3 and KCNMB4. Interacts with gamma subunits LRRC26, LRRC38, LRRC52 and LRRC55. Beta and gamma subunits are accessory, and modulate its activity. Interacts with RAB11B. In terms of processing, phosphorylated. Phosphorylation by kinases such as PKA and/or PKG. In smooth muscles, phosphorylation affects its activity. Post-translationally, palmitoylation by ZDHHC22 and ZDHHC23 within the intracellular linker between the S0 and S1 transmembrane domains regulates localization to the plasma membrane. Depalmitoylated by LYPLA1 and LYPLAL1, leading to retard exit from the trans-Golgi network.

It is found in the cell membrane. It localises to the endoplasmic reticulum membrane. The catalysed reaction is K(+)(in) = K(+)(out). With respect to regulation, ethanol and carbon monoxide-bound heme increase channel activation. Heme inhibits channel activation. Functionally, potassium channel activated by both membrane depolarization or increase in cytosolic Ca(2+) that mediates export of K(+). It is also activated by the concentration of cytosolic Mg(2+). Its activation dampens the excitatory events that elevate the cytosolic Ca(2+) concentration and/or depolarize the cell membrane. It therefore contributes to repolarization of the membrane potential. Plays a key role in controlling excitability in a number of systems, such as regulation of the contraction of smooth muscle, the tuning of hair cells in the cochlea, regulation of transmitter release, and innate immunity. In smooth muscles, its activation by high level of Ca(2+), caused by ryanodine receptors in the sarcoplasmic reticulum, regulates the membrane potential. In cochlea cells, its number and kinetic properties partly determine the characteristic frequency of each hair cell and thereby helps to establish a tonotopic map. Kinetics of KCNMA1 channels are determined by alternative splicing, phosphorylation status and its combination with modulating beta subunits. Highly sensitive to both iberiotoxin (IbTx) and charybdotoxin (CTX). Potassium channel activated by both membrane depolarization or increase in cytosolic Ca(2+) that mediates export of K(+). The polypeptide is Calcium-activated potassium channel subunit alpha-1 (Kcnma1) (Rattus norvegicus (Rat)).